An 848-amino-acid polypeptide reads, in one-letter code: Adenylate cyclase (848 aa).

Residues 1-535 form a catalytic region; the sequence is MYLYIETLKQ…DVSHHFPLRL (535 aa). The tract at residues 541–848 is regulatory; it reads KALYSPCEIR…DAPLLQQYFS (308 aa). Position 609 is a phosphohistidine; by CRR (His-609).

The protein belongs to the adenylyl cyclase class-1 family.

It is found in the cytoplasm. It catalyses the reaction ATP = 3',5'-cyclic AMP + diphosphate. In Salmonella typhi, this protein is Adenylate cyclase (cyaA).